The sequence spans 287 residues: ATP synthase gamma chain (287 aa).

It belongs to the ATPase gamma chain family. F-type ATPases have 2 components, CF(1) - the catalytic core - and CF(0) - the membrane proton channel. CF(1) has five subunits: alpha(3), beta(3), gamma(1), delta(1), epsilon(1). CF(0) has three main subunits: a, b and c.

Its subcellular location is the cell inner membrane. Its function is as follows. Produces ATP from ADP in the presence of a proton gradient across the membrane. The gamma chain is believed to be important in regulating ATPase activity and the flow of protons through the CF(0) complex. The chain is ATP synthase gamma chain from Colwellia psychrerythraea (strain 34H / ATCC BAA-681) (Vibrio psychroerythus).